The following is a 138-amino-acid chain: Small ribosomal subunit protein uS11c (138 aa).

This sequence belongs to the universal ribosomal protein uS11 family. As to quaternary structure, part of the 30S ribosomal subunit.

The protein localises to the plastid. The protein resides in the chloroplast. This is Small ribosomal subunit protein uS11c from Illicium oligandrum (Star anise).